The sequence spans 193 residues: Pyridoxal 5'-phosphate synthase subunit PdxT (193 aa).

An L-glutamine-binding site is contributed by 50–52 (GES). C82 serves as the catalytic Nucleophile. L-glutamine-binding positions include R109 and 136–137 (IR). Active-site charge relay system residues include H172 and E174.

It belongs to the glutaminase PdxT/SNO family. As to quaternary structure, in the presence of PdxS, forms a dodecamer of heterodimers. Only shows activity in the heterodimer.

It catalyses the reaction aldehydo-D-ribose 5-phosphate + D-glyceraldehyde 3-phosphate + L-glutamine = pyridoxal 5'-phosphate + L-glutamate + phosphate + 3 H2O + H(+). The enzyme catalyses L-glutamine + H2O = L-glutamate + NH4(+). Its pathway is cofactor biosynthesis; pyridoxal 5'-phosphate biosynthesis. In terms of biological role, catalyzes the hydrolysis of glutamine to glutamate and ammonia as part of the biosynthesis of pyridoxal 5'-phosphate. The resulting ammonia molecule is channeled to the active site of PdxS. In Streptococcus pneumoniae (strain JJA), this protein is Pyridoxal 5'-phosphate synthase subunit PdxT.